A 369-amino-acid chain; its full sequence is Phenylalanine--tRNA ligase alpha subunit (369 aa).

E269 is a Mg(2+) binding site.

Belongs to the class-II aminoacyl-tRNA synthetase family. Phe-tRNA synthetase alpha subunit type 1 subfamily. Tetramer of two alpha and two beta subunits. Mg(2+) serves as cofactor.

It is found in the cytoplasm. It carries out the reaction tRNA(Phe) + L-phenylalanine + ATP = L-phenylalanyl-tRNA(Phe) + AMP + diphosphate + H(+). The sequence is that of Phenylalanine--tRNA ligase alpha subunit from Brucella ovis (strain ATCC 25840 / 63/290 / NCTC 10512).